Consider the following 369-residue polypeptide: LIM homeobox transcription factor 1-beta (369 aa).

2 LIM zinc-binding domains span residues 23-73 (CEGC…CKQD) and 82-135 (CSGC…CKGD). Residues 143–196 (LSSVSPDESDSVKSEDEDGDMKPAKGQGSQSKGGGDDGKDPRRPKRPRTILTTQ) form a disordered region. A DNA-binding region (homeobox) is located at residues 186–245 (PKRPRTILTTQQRRAFKASFEVSSKPCRKVRETLAAETGLSVRVVQVWFQNQRAKMKKLA).

As to quaternary structure, interacts with DHX9.

The protein localises to the nucleus. Transcription factor involved in the regulation of podocyte-expressed genes. Essential for the specification of dorsal limb fate at both the zeugopodal and autopodal levels. In Mesocricetus auratus (Golden hamster), this protein is LIM homeobox transcription factor 1-beta (LMX1B).